A 330-amino-acid chain; its full sequence is Beta-ketoacyl-[acyl-carrier-protein] synthase III (330 aa).

Catalysis depends on residues C118 and H257. The ACP-binding stretch occupies residues 258 to 262 (QANLR). The active site involves N287.

This sequence belongs to the thiolase-like superfamily. FabH family. Homodimer.

Its subcellular location is the cytoplasm. It catalyses the reaction malonyl-[ACP] + acetyl-CoA + H(+) = 3-oxobutanoyl-[ACP] + CO2 + CoA. The protein operates within lipid metabolism; fatty acid biosynthesis. In terms of biological role, catalyzes the condensation reaction of fatty acid synthesis by the addition to an acyl acceptor of two carbons from malonyl-ACP. Catalyzes the first condensation reaction which initiates fatty acid synthesis and may therefore play a role in governing the total rate of fatty acid production. Possesses both acetoacetyl-ACP synthase and acetyl transacylase activities. Its substrate specificity determines the biosynthesis of branched-chain and/or straight-chain of fatty acids. This Nitratidesulfovibrio vulgaris (strain DSM 19637 / Miyazaki F) (Desulfovibrio vulgaris) protein is Beta-ketoacyl-[acyl-carrier-protein] synthase III.